A 687-amino-acid chain; its full sequence is Acetolactate synthase catalytic subunit, mitochondrial (687 aa).

A mitochondrion-targeting transit peptide spans 1 to 90 (MIRQSTLKNF…AEPDMDTSFV (90 aa)). The segment covering 43 to 52 (YYSASPLPAS) has biased composition (low complexity). Positions 43–68 (YYSASPLPASKRPEPAPSFNVDPLEQ) are disordered. Glu-139 contributes to the thiamine diphosphate binding site. FAD is bound by residues Arg-241, 355-376 (HGCA…VGAR), and 407-426 (EVSP…VEGD). The thiamine pyrophosphate binding stretch occupies residues 499-579 (QHQMWAAQHW…VKILILNNEE (81 aa)). Asp-550, Asn-577, and Glu-579 together coordinate Mg(2+).

It belongs to the TPP enzyme family. As to quaternary structure, homodimer. The acetolactate synthase complex contains the catalytic subunit ILV2 and the regulatory small subunit ILV6. Requires Mg(2+) as cofactor. It depends on thiamine diphosphate as a cofactor.

It is found in the mitochondrion. The enzyme catalyses 2 pyruvate + H(+) = (2S)-2-acetolactate + CO2. The catalysed reaction is 2-oxobutanoate + pyruvate + H(+) = (S)-2-ethyl-2-hydroxy-3-oxobutanoate + CO2. It participates in amino-acid biosynthesis; L-isoleucine biosynthesis; L-isoleucine from 2-oxobutanoate: step 1/4. The protein operates within amino-acid biosynthesis; L-valine biosynthesis; L-valine from pyruvate: step 1/4. With respect to regulation, the regulatory subunit ILV6 stimulates enzymatic activity seven- to tenfold and confers sensitivity to inhibition by valine and activation by ATP. Its function is as follows. Catalytic subunit of mitochondrial acetolactate synthase, which catalyzes the first of a series of common steps in the biosynthesis of the branched-chain amino acids. Catalyzes the irreversible decarboxylation of pyruvate to a bound hydroxyethyl group that then condenses with either a second pyruvate molecule to form 2-acetolactate (AL) or with 2-ketobutyrate to form 2-aceto-2-hydroxybutyrate (AHB). The first product is the precursor for valine and leucine biosynthesis, while the second leads to isoleucine. This is Acetolactate synthase catalytic subunit, mitochondrial (ILV2) from Saccharomyces cerevisiae (strain ATCC 204508 / S288c) (Baker's yeast).